We begin with the raw amino-acid sequence, 156 residues long: 6,7-dimethyl-8-ribityllumazine synthase (156 aa).

Residues Phe-23, 57–59, and 81–83 contribute to the 5-amino-6-(D-ribitylamino)uracil site; these read SFE and AVI. 86–87 contributes to the (2S)-2-hydroxy-3-oxobutyl phosphate binding site; the sequence is GT. His-89 functions as the Proton donor in the catalytic mechanism. Position 114 (Phe-114) interacts with 5-amino-6-(D-ribitylamino)uracil. Arg-128 contacts (2S)-2-hydroxy-3-oxobutyl phosphate.

This sequence belongs to the DMRL synthase family. In terms of assembly, forms an icosahedral capsid composed of 60 subunits, arranged as a dodecamer of pentamers.

The enzyme catalyses (2S)-2-hydroxy-3-oxobutyl phosphate + 5-amino-6-(D-ribitylamino)uracil = 6,7-dimethyl-8-(1-D-ribityl)lumazine + phosphate + 2 H2O + H(+). Its pathway is cofactor biosynthesis; riboflavin biosynthesis; riboflavin from 2-hydroxy-3-oxobutyl phosphate and 5-amino-6-(D-ribitylamino)uracil: step 1/2. Its function is as follows. Catalyzes the formation of 6,7-dimethyl-8-ribityllumazine by condensation of 5-amino-6-(D-ribitylamino)uracil with 3,4-dihydroxy-2-butanone 4-phosphate. This is the penultimate step in the biosynthesis of riboflavin. The sequence is that of 6,7-dimethyl-8-ribityllumazine synthase from Alkalilimnicola ehrlichii (strain ATCC BAA-1101 / DSM 17681 / MLHE-1).